A 530-amino-acid chain; its full sequence is Methionine--tRNA ligase (530 aa).

The short motif at 18–28 (YYVNDVPHIGS) is the 'HIGH' region element. Zn(2+)-binding residues include Cys-133, Cys-136, Cys-151, and His-154. The 'KMSKS' region motif lies at 307 to 311 (KMGKS). Lys-310 contributes to the ATP binding site.

It belongs to the class-I aminoacyl-tRNA synthetase family. MetG type 2A subfamily. As to quaternary structure, monomer. Requires Zn(2+) as cofactor.

The protein resides in the cytoplasm. The enzyme catalyses tRNA(Met) + L-methionine + ATP = L-methionyl-tRNA(Met) + AMP + diphosphate. Its function is as follows. Is required not only for elongation of protein synthesis but also for the initiation of all mRNA translation through initiator tRNA(fMet) aminoacylation. The protein is Methionine--tRNA ligase of Nostoc sp. (strain PCC 7120 / SAG 25.82 / UTEX 2576).